Consider the following 281-residue polypeptide: uncharacterized protein (281 aa).

The protein localises to the plastid. Its subcellular location is the chloroplast. This is an uncharacterized protein from Euglena gracilis.